Reading from the N-terminus, the 298-residue chain is Movement protein BC1 (298 aa).

The disordered stretch occupies residues Leu253 to Lys273.

Belongs to the begomovirus movement protein BC1 family. In terms of assembly, binds to dimeric supercoiled plasmid DNA. Post-translationally, phosphorylated.

The protein localises to the host cell membrane. Its subcellular location is the host microsome membrane. It is found in the host endoplasmic reticulum membrane. In terms of biological role, transports viral genome to neighboring plant cells directly through plasmosdesmata, without any budding. The movement protein allows efficient cell to cell propagation, by bypassing the host cell wall barrier. Begomovirus genome is shuttled out of nucleus by Nuclear shuttle protein (NSP) and the movement protein transports the DNA-NSP complex to cell plasmodesmata and facilitates further movement across the cell wall. In Hewittia sublobata (Coralbush), this protein is Movement protein BC1.